The chain runs to 286 residues: Translocon-associated protein subunit alpha (286 aa).

The signal sequence occupies residues 1–21; that stretch reads MRLLPRLLLLLLLVFPATVLL. The Lumenal segment spans residues 22–207; that stretch reads RGGPGGSLAE…EREDGLDGQT (186 aa). Residues 28 to 83 are disordered; the sequence is SLAEAQDLSEDEETVEDSVIEDEDDEAEVEEDEPTDLAEDREEEDVSGEPEASPSA. The segment covering 34 to 75 has biased composition (acidic residues); that stretch reads DLSEDEETVEDSVIEDEDDEAEVEEDEPTDLAEDREEEDVSG. Residues asparagine 136 and asparagine 191 are each glycosylated (N-linked (GlcNAc...) asparagine). Residues 208-228 form a helical membrane-spanning segment; that stretch reads IFMYMSLAGLGLLVVVGLHQL. Residues 229–286 are Cytoplasmic-facing; the sequence is LESRNRKRPIQKVEMGTSSQNDVDMSWIPQETLNQINKASPRRLPRKRPQKRSVGSDE. Position 247 is a phosphoserine (serine 247). Threonine 260 is subject to Phosphothreonine. Positions 264-286 are disordered; sequence INKASPRRLPRKRPQKRSVGSDE. Position 268 is a phosphoserine (serine 268). Positions 268–279 are enriched in basic residues; sequence SPRRLPRKRPQK.

It belongs to the TRAP-alpha family. Heterotetramer of TRAP-alpha, TRAP-beta, TRAP-delta and TRAP-gamma. Interacts with palmitoylated calnexin (CALX), the interaction is required for efficient folding of glycosylated proteins. In terms of processing, phosphorylated in its cytoplasmic tail.

Its subcellular location is the endoplasmic reticulum membrane. Its function is as follows. TRAP proteins are part of a complex whose function is to bind calcium to the ER membrane and thereby regulate the retention of ER resident proteins. May be involved in the recycling of the translocation apparatus after completion of the translocation process or may function as a membrane-bound chaperone facilitating folding of translocated proteins. This chain is Translocon-associated protein subunit alpha (SSR1), found in Oryctolagus cuniculus (Rabbit).